We begin with the raw amino-acid sequence, 252 residues long: Clc-like protein 2 (252 aa).

4 helical membrane passes run 7–29 (YAIL…TPAW), 91–111 (LFHI…SFCV), 127–147 (VFLV…AVYS), and 173–193 (IALT…VHVL).

It belongs to the Clc family.

The protein localises to the membrane. This chain is Clc-like protein 2 (clc-2), found in Caenorhabditis elegans.